A 224-amino-acid polypeptide reads, in one-letter code: Large ribosomal subunit protein uL3 (224 aa).

Glutamine 158 is modified (N5-methylglutamine).

Belongs to the universal ribosomal protein uL3 family. In terms of assembly, part of the 50S ribosomal subunit. Forms a cluster with proteins L14 and L19. In terms of processing, methylated by PrmB.

Functionally, one of the primary rRNA binding proteins, it binds directly near the 3'-end of the 23S rRNA, where it nucleates assembly of the 50S subunit. In Paracidovorax citrulli (strain AAC00-1) (Acidovorax citrulli), this protein is Large ribosomal subunit protein uL3.